We begin with the raw amino-acid sequence, 289 residues long: Formamidopyrimidine-DNA glycosylase 1 (289 aa).

Residue Pro2 is the Schiff-base intermediate with DNA of the active site. Glu3 functions as the Proton donor in the catalytic mechanism. The active-site Proton donor; for beta-elimination activity is Lys61. Residues His100, Arg119, and Lys165 each contribute to the DNA site. Residues 251-285 (DAYGREGENCRRCGAVIRRERFMNRSSFYCPRCQP) form an FPG-type zinc finger. Arg275 functions as the Proton donor; for delta-elimination activity in the catalytic mechanism.

The protein belongs to the FPG family. As to quaternary structure, monomer. It depends on Zn(2+) as a cofactor.

The catalysed reaction is Hydrolysis of DNA containing ring-opened 7-methylguanine residues, releasing 2,6-diamino-4-hydroxy-5-(N-methyl)formamidopyrimidine.. It catalyses the reaction 2'-deoxyribonucleotide-(2'-deoxyribose 5'-phosphate)-2'-deoxyribonucleotide-DNA = a 3'-end 2'-deoxyribonucleotide-(2,3-dehydro-2,3-deoxyribose 5'-phosphate)-DNA + a 5'-end 5'-phospho-2'-deoxyribonucleoside-DNA + H(+). Functionally, involved in base excision repair of DNA damaged by oxidation or by mutagenic agents. Acts as a DNA glycosylase that recognizes and removes damaged bases. Has a preference for oxidized purines, such as 7,8-dihydro-8-oxoguanine (8-oxoG) when paired with C, G or T, as well as methyl-faPy (formanidopyrimidine residues) in poly(dG-dC) and spiroiminodihydantoin:C base pairs. Unlike its E.coli ortholog has no activity on 8-oxoG:A. Has AP (apurinic/apyrimidinic) lyase activity and introduces nicks in the DNA strand. Cleaves the DNA backbone by beta-delta elimination to generate a single-strand break at the site of the removed base with both 3'- and 5'-phosphates. Cleaves ssDNA containing an AP site. Complements the H(2)O(2) sensitivity of an M.smegmatis fpg disruption mutant; upon expression in M.smegmatis excises 8-oxoG from dsDNA. This Mycobacterium tuberculosis (strain ATCC 25618 / H37Rv) protein is Formamidopyrimidine-DNA glycosylase 1 (fpg1).